The chain runs to 103 residues: Large ribosomal subunit protein bL21 (103 aa).

It belongs to the bacterial ribosomal protein bL21 family. Part of the 50S ribosomal subunit. Contacts protein L20.

Its function is as follows. This protein binds to 23S rRNA in the presence of protein L20. This Shewanella sediminis (strain HAW-EB3) protein is Large ribosomal subunit protein bL21.